The following is a 616-amino-acid chain: Dihydroxy-acid dehydratase (616 aa).

Residue D81 coordinates Mg(2+). Residue C122 participates in [2Fe-2S] cluster binding. Mg(2+) contacts are provided by D123 and K124. N6-carboxylysine is present on K124. A [2Fe-2S] cluster-binding site is contributed by C195. E491 is a Mg(2+) binding site. S517 (proton acceptor) is an active-site residue.

This sequence belongs to the IlvD/Edd family. Homodimer. The cofactor is [2Fe-2S] cluster. Requires Mg(2+) as cofactor.

It carries out the reaction (2R)-2,3-dihydroxy-3-methylbutanoate = 3-methyl-2-oxobutanoate + H2O. The enzyme catalyses (2R,3R)-2,3-dihydroxy-3-methylpentanoate = (S)-3-methyl-2-oxopentanoate + H2O. It participates in amino-acid biosynthesis; L-isoleucine biosynthesis; L-isoleucine from 2-oxobutanoate: step 3/4. It functions in the pathway amino-acid biosynthesis; L-valine biosynthesis; L-valine from pyruvate: step 3/4. Its function is as follows. Functions in the biosynthesis of branched-chain amino acids. Catalyzes the dehydration of (2R,3R)-2,3-dihydroxy-3-methylpentanoate (2,3-dihydroxy-3-methylvalerate) into 2-oxo-3-methylpentanoate (2-oxo-3-methylvalerate) and of (2R)-2,3-dihydroxy-3-methylbutanoate (2,3-dihydroxyisovalerate) into 2-oxo-3-methylbutanoate (2-oxoisovalerate), the penultimate precursor to L-isoleucine and L-valine, respectively. The polypeptide is Dihydroxy-acid dehydratase (Azoarcus sp. (strain BH72)).